Reading from the N-terminus, the 232-residue chain is Orotate phosphoribosyltransferase (232 aa).

5-phospho-alpha-D-ribose 1-diphosphate-binding positions include arginine 107, lysine 108, lysine 111, histidine 113, and 133 to 141 (EDLTTAGGS). Threonine 137 contacts orotate.

Belongs to the purine/pyrimidine phosphoribosyltransferase family. PyrE subfamily. In terms of assembly, homodimer. Mg(2+) serves as cofactor.

It carries out the reaction orotidine 5'-phosphate + diphosphate = orotate + 5-phospho-alpha-D-ribose 1-diphosphate. Its pathway is pyrimidine metabolism; UMP biosynthesis via de novo pathway; UMP from orotate: step 1/2. Its function is as follows. Catalyzes the transfer of a ribosyl phosphate group from 5-phosphoribose 1-diphosphate to orotate, leading to the formation of orotidine monophosphate (OMP). This chain is Orotate phosphoribosyltransferase, found in Rhizobium rhizogenes (strain K84 / ATCC BAA-868) (Agrobacterium radiobacter).